Here is a 732-residue protein sequence, read N- to C-terminus: Small conductance calcium-activated potassium channel protein 3 (732 aa).

The segment covering 1–11 (MDTSGHFHDSG) has biased composition (basic and acidic residues). Disordered regions lie at residues 1–82 (MDTS…QQAP) and 119–161 (AILH…QASP). Over residues 35–61 (QPPPPPAPPAVPQQPPGPLLQPQPPQP) the composition is skewed to pro residues. Residues 62 to 82 (QQQQSQQQQQQQSQQQQQQAP) are compositionally biased toward low complexity. Residues 119 to 133 (AILHPSSRQGSQLNL) show a composition bias toward polar residues. Low complexity predominate over residues 139–148 (GHSPSSTATS). S168 bears the Phosphoserine mark. The span at 241 to 257 (THNHQHAGTTAGSTTFP) shows a compositional bias: polar residues. A disordered region spans residues 241–260 (THNHQHAGTTAGSTTFPKAN). The chain crosses the membrane as a helical span at residues 289-309 (LIFGMFGIVVMVIETELSWGL). Residues 316–336 (FSLALKCLISLSTVILLGLII) traverse the membrane as a helical segment. A helical membrane pass occupies residues 367–387 (ISLEMLVCAIHPIPGEYKFFW). The chain crosses the membrane as a helical span at residues 406 to 426 (IILSIPMFLRLYLIARVMLLH). A helical transmembrane segment spans residues 455–475 (LMTICPGTVLLVFSISLWIIA). Residues 495 to 515 (FLGAMWLISITFLSIGYGDMV) constitute an intramembrane region (pore-forming). Residues 524–544 (VCLLTGIMGAGCTALVVAVVA) traverse the membrane as a helical segment. Residues 562-638 (DTQLTKRIKN…LVDLSKMQNV (77 aa)) form a calmodulin-binding region. Positions 643-670 (ITELNDRSEDLEKQIGSLESKLEHLTAS) form a coiled coil. A disordered region spans residues 704-732 (GTSHAPPSDSPIGISSTSFPTPYTSSSSC). Residues 718–732 (SSTSFPTPYTSSSSC) are compositionally biased toward low complexity.

The protein belongs to the potassium channel KCNN family. KCa2.3/KCNN3 subfamily. As to quaternary structure, homodimer. Heteromultimer with KCNN2 or KCNN1; this modulates plasma membrane expression and consequently the small conductance calcium-activated potassium channel activity. The complex is composed of 4 channel subunits each of which binds to a calmodulin subunit which regulates the channel activity through calcium-binding. Interacts with CALM1. In terms of tissue distribution, expressed at low levels in atrial and ventricular myocytes (at protein level).

It is found in the cell membrane. Its subcellular location is the cytoplasm. The protein resides in the myofibril. The protein localises to the sarcomere. It localises to the z line. The catalysed reaction is K(+)(in) = K(+)(out). With respect to regulation, inhibited by bee venom neurotoxin apamin. Small conductance calcium-activated potassium channel that mediates the voltage-independent transmembrane transfer of potassium across the cell membrane through a constitutive interaction with calmodulin which binds the intracellular calcium allowing its opening. The current is characterized by a voltage-independent activation, an intracellular calcium concentration increase-dependent activation and a single-channel conductance of 10 picosiemens. Also presents an inwardly rectifying current, thus reducing its already small outward conductance of potassium ions, which is particularly the case when the membrane potential displays positive values, above + 20 mV. Activation is followed by membrane hyperpolarization. Thought to regulate neuronal excitability by contributing to the slow component of synaptic afterhyperpolarization. The chain is Small conductance calcium-activated potassium channel protein 3 from Mus musculus (Mouse).